The primary structure comprises 244 residues: Phosphoadenosine 5'-phosphosulfate reductase (244 aa).

Cysteine 239 serves as the catalytic Nucleophile; cysteine thiosulfonate intermediate.

This sequence belongs to the PAPS reductase family. CysH subfamily.

The protein resides in the cytoplasm. It catalyses the reaction [thioredoxin]-disulfide + sulfite + adenosine 3',5'-bisphosphate + 2 H(+) = [thioredoxin]-dithiol + 3'-phosphoadenylyl sulfate. It functions in the pathway sulfur metabolism; hydrogen sulfide biosynthesis; sulfite from sulfate: step 3/3. In terms of biological role, catalyzes the formation of sulfite from phosphoadenosine 5'-phosphosulfate (PAPS) using thioredoxin as an electron donor. This chain is Phosphoadenosine 5'-phosphosulfate reductase, found in Salmonella typhi.